Here is a 541-residue protein sequence, read N- to C-terminus: Chaperonin GroEL 2 (541 aa).

ATP contacts are provided by residues 30-33, Lys51, 87-91, Gly415, and Asp496; these read TLGP and DGTTT.

Belongs to the chaperonin (HSP60) family. In terms of assembly, forms a cylinder of 14 subunits composed of two heptameric rings stacked back-to-back. Interacts with the co-chaperonin GroES.

It is found in the cytoplasm. It carries out the reaction ATP + H2O + a folded polypeptide = ADP + phosphate + an unfolded polypeptide.. Functionally, together with its co-chaperonin GroES, plays an essential role in assisting protein folding. The GroEL-GroES system forms a nano-cage that allows encapsulation of the non-native substrate proteins and provides a physical environment optimized to promote and accelerate protein folding. In Gluconacetobacter diazotrophicus (strain ATCC 49037 / DSM 5601 / CCUG 37298 / CIP 103539 / LMG 7603 / PAl5), this protein is Chaperonin GroEL 2.